The chain runs to 428 residues: 3-phosphoshikimate 1-carboxyvinyltransferase (428 aa).

The 3-phosphoshikimate site is built by Lys-19, Ser-20, and Arg-24. Lys-19 contacts phosphoenolpyruvate. Phosphoenolpyruvate-binding residues include Gly-91 and Arg-119. 3-phosphoshikimate-binding residues include Ser-164, Gln-166, Asp-312, and Lys-339. Gln-166 lines the phosphoenolpyruvate pocket. Catalysis depends on Asp-312, which acts as the Proton acceptor. Arg-343 and Arg-386 together coordinate phosphoenolpyruvate.

This sequence belongs to the EPSP synthase family. In terms of assembly, monomer.

It localises to the cytoplasm. The catalysed reaction is 3-phosphoshikimate + phosphoenolpyruvate = 5-O-(1-carboxyvinyl)-3-phosphoshikimate + phosphate. It functions in the pathway metabolic intermediate biosynthesis; chorismate biosynthesis; chorismate from D-erythrose 4-phosphate and phosphoenolpyruvate: step 6/7. In terms of biological role, catalyzes the transfer of the enolpyruvyl moiety of phosphoenolpyruvate (PEP) to the 5-hydroxyl of shikimate-3-phosphate (S3P) to produce enolpyruvyl shikimate-3-phosphate and inorganic phosphate. This is 3-phosphoshikimate 1-carboxyvinyltransferase from Bacillus licheniformis (strain ATCC 14580 / DSM 13 / JCM 2505 / CCUG 7422 / NBRC 12200 / NCIMB 9375 / NCTC 10341 / NRRL NRS-1264 / Gibson 46).